Consider the following 160-residue polypeptide: MTNKVIYPGTFDPVTNGHTDLIGRAAKLFDEVVVGVANSPSKRPLFDLDERVQLARQVTAHLPNVKVVGFSGLLVDFAREQQANVLIRGLRAVSDFEYEFQLANMNRRLMPELESVFLTPAEENSFISSTLVKEVALHGGDIRQFVDPAVAAAIKAKQTK.

Residue threonine 10 coordinates substrate. ATP is bound by residues 10-11 (TF) and histidine 18. Residues lysine 42, leucine 74, and arginine 88 each coordinate substrate. ATP contacts are provided by residues 89–91 (GLR), glutamate 99, and 124–130 (NSFISST).

This sequence belongs to the bacterial CoaD family. In terms of assembly, homohexamer. Requires Mg(2+) as cofactor.

The protein resides in the cytoplasm. It catalyses the reaction (R)-4'-phosphopantetheine + ATP + H(+) = 3'-dephospho-CoA + diphosphate. It functions in the pathway cofactor biosynthesis; coenzyme A biosynthesis; CoA from (R)-pantothenate: step 4/5. Functionally, reversibly transfers an adenylyl group from ATP to 4'-phosphopantetheine, yielding dephospho-CoA (dPCoA) and pyrophosphate. This Aeromonas hydrophila subsp. hydrophila (strain ATCC 7966 / DSM 30187 / BCRC 13018 / CCUG 14551 / JCM 1027 / KCTC 2358 / NCIMB 9240 / NCTC 8049) protein is Phosphopantetheine adenylyltransferase.